The following is a 252-amino-acid chain: Triosephosphate isomerase (252 aa).

Substrate is bound at residue 10 to 12 (NWK). His96 (electrophile) is an active-site residue. The Proton acceptor role is filled by Glu168. Substrate contacts are provided by residues Gly174, Ser214, and 235 to 236 (GG).

The protein belongs to the triosephosphate isomerase family. In terms of assembly, homodimer.

The protein resides in the cytoplasm. The enzyme catalyses D-glyceraldehyde 3-phosphate = dihydroxyacetone phosphate. Its pathway is carbohydrate biosynthesis; gluconeogenesis. It functions in the pathway carbohydrate degradation; glycolysis; D-glyceraldehyde 3-phosphate from glycerone phosphate: step 1/1. Functionally, involved in the gluconeogenesis. Catalyzes stereospecifically the conversion of dihydroxyacetone phosphate (DHAP) to D-glyceraldehyde-3-phosphate (G3P). The chain is Triosephosphate isomerase from Streptococcus agalactiae serotype Ia (strain ATCC 27591 / A909 / CDC SS700).